Consider the following 1111-residue polypeptide: Receptor-type guanylate cyclase gcy-14 (1111 aa).

Positions 1 to 14 are cleaved as a signal peptide; sequence MCLFLLLFPYLASG. Topologically, residues 15–473 are extracellular; that stretch reads QFLQTVKVGL…ECPPDFVKEY (459 aa). N-linked (GlcNAc...) asparagine glycosylation is found at Asn65, Asn130, Asn318, Asn340, Asn365, and Asn379. Residues 474–494 traverse the membrane as a helical segment; sequence LVYTIIAAVIVVLALLAGCAG. One can recognise a Protein kinase domain in the interval 482–817; that stretch reads VIVVLALLAG…KSNLMDHVFN (336 aa). ATP is bound by residues 488–496 and Lys545; that span reads LLAGCAGLL. Residues 495-1111 are Cytoplasmic-facing; sequence LLYTMQMKRK…DFNNGNECVS (617 aa). Positions 875 to 1005 constitute a Guanylate cyclase domain; that stretch reads TIFFSDVVQF…DAVNTASRME (131 aa). The disordered stretch occupies residues 1061–1082; the sequence is SAQAPREKTPEPPRRQSVRSIS. A compositionally biased stretch (basic and acidic residues) spans 1065-1074; that stretch reads PREKTPEPPR.

It belongs to the adenylyl cyclase class-4/guanylyl cyclase family. Homodimer. In terms of tissue distribution, expressed asymmetrically in ASEL sensory neuron.

It is found in the cell membrane. It localises to the cell projection. The protein localises to the cilium. The catalysed reaction is GTP = 3',5'-cyclic GMP + diphosphate. Its function is as follows. Guanylate cyclase involved in the production of the second messenger cGMP. Regulates chemotaxis responses toward Na(1+) and Li(1+) salt ions and alkaline pH in ASE left (ASEL) sensory neuron. Directly senses environmental alkalinity in ASEL neuron which probably leads to the activation of cGMP-gated cation channel tax2/tax4. The sequence is that of Receptor-type guanylate cyclase gcy-14 from Caenorhabditis elegans.